The chain runs to 354 residues: Selenide, water dikinase (354 aa).

Cys23 is an active-site residue. Residues Lys26 and 54-56 (TSD) each bind ATP. Position 57 (Asp57) interacts with Mg(2+). ATP contacts are provided by residues Asp74, Asp97, and 145–147 (GHS). Asp97 is a Mg(2+) binding site. Asp233 is a binding site for Mg(2+).

Belongs to the selenophosphate synthase 1 family. Class I subfamily. Homodimer. The cofactor is Mg(2+).

It carries out the reaction hydrogenselenide + ATP + H2O = selenophosphate + AMP + phosphate + 2 H(+). Its function is as follows. Synthesizes selenophosphate from selenide and ATP. In Burkholderia pseudomallei (strain K96243), this protein is Selenide, water dikinase.